The chain runs to 382 residues: Chaperone protein DnaJ (382 aa).

The region spanning 5-70 (DYYDLLGLSK…DKRAAYDRYG (66 aa)) is the J domain. The CR-type zinc-finger motif lies at 138 to 216 (GTKVPINYVT…CSGSGRVRDE (79 aa)). Positions 151, 154, 168, 171, 190, 193, 204, and 207 each coordinate Zn(2+). 4 CXXCXGXG motif repeats span residues 151 to 158 (CSSCSGSG), 168 to 175 (CNTCHGAG), 190 to 197 (CHVCNGEG), and 204 to 211 (CKKCSGSG).

It belongs to the DnaJ family. As to quaternary structure, homodimer. The cofactor is Zn(2+).

It is found in the cytoplasm. In terms of biological role, participates actively in the response to hyperosmotic and heat shock by preventing the aggregation of stress-denatured proteins and by disaggregating proteins, also in an autonomous, DnaK-independent fashion. Unfolded proteins bind initially to DnaJ; upon interaction with the DnaJ-bound protein, DnaK hydrolyzes its bound ATP, resulting in the formation of a stable complex. GrpE releases ADP from DnaK; ATP binding to DnaK triggers the release of the substrate protein, thus completing the reaction cycle. Several rounds of ATP-dependent interactions between DnaJ, DnaK and GrpE are required for fully efficient folding. Also involved, together with DnaK and GrpE, in the DNA replication of plasmids through activation of initiation proteins. The protein is Chaperone protein DnaJ of Ehrlichia ruminantium (strain Gardel).